An 88-amino-acid polypeptide reads, in one-letter code: Large ribosomal subunit protein bL27 (88 aa).

The tract at residues 1-24 (MAHKKAGGSSRNGRDSEGRRLGVK) is disordered.

Belongs to the bacterial ribosomal protein bL27 family.

The protein is Large ribosomal subunit protein bL27 of Methylobacterium radiotolerans (strain ATCC 27329 / DSM 1819 / JCM 2831 / NBRC 15690 / NCIMB 10815 / 0-1).